The primary structure comprises 961 residues: Replication protein 1a (961 aa).

Residues 48 to 380 (VRNKLSIEEA…VIINGQAIMA (333 aa)) form a methyltransferase region. The 190-residue stretch at 71 to 260 (NLTQQYHAPH…HGWQDLGSFF (190 aa)) folds into the Alphavirus-like MT domain. The segment at 392 to 409 (VAFALTLNLYQKYEKLTA) is membrane association. The segment covering 503-512 (KTKRSKKKAK) has biased composition (basic residues). Residues 503–541 (KTKRSKKKAKVPPAAEIPQEEFHDAPESSSPESVSDDVK) form a disordered region. The (+)RNA virus helicase ATP-binding domain maps to 655–810 (DKTCACSNLR…NLQYDRRDVV (156 aa)). The interval 682–946 (MVDGVAGCGK…TRHKKSFEYC (265 aa)) is ATP-dependent helicase. 685-692 (GVAGCGKT) contacts ATP. Positions 811–961 (HKTYRCPQDV…AGDLIFNCVK (151 aa)) constitute a (+)RNA virus helicase C-terminal domain.

Belongs to the bromoviridae replication protein 1a family. As to quaternary structure, interacts with RNA-directed RNA polymerase 2a.

It localises to the host endoplasmic reticulum membrane. Its function is as follows. Involved in the virus replication. Contains a helicase domain and a methyltransferase domain. The methyltransferase domain is probably involved in viral RNA capping. Involved in the formation of ER membrane spherular invaginations in which RNA replication complexes form. This chain is Replication protein 1a, found in Bromus inermis (Smooth brome grass).